The primary structure comprises 435 residues: GTPase Der (435 aa).

EngA-type G domains follow at residues 4–167 (KIVA…SKND) and 175–350 (TKIA…QSLS). Residues 10 to 17 (GKPNVGKS), 57 to 61 (DTGGI), 119 to 122 (NKYD), 181 to 188 (GKPNVGKS), 228 to 232 (DTAGI), and 293 to 296 (NKWD) contribute to the GTP site. Residues 351 to 435 (VKVKTYVLNE…PINLIFRERK (85 aa)) form the KH-like domain.

This sequence belongs to the TRAFAC class TrmE-Era-EngA-EngB-Septin-like GTPase superfamily. EngA (Der) GTPase family. In terms of assembly, associates with the 50S ribosomal subunit.

Its function is as follows. GTPase that plays an essential role in the late steps of ribosome biogenesis. The protein is GTPase Der of Mycoplasma capricolum subsp. capricolum (strain California kid / ATCC 27343 / NCTC 10154).